The primary structure comprises 152 residues: Large ribosomal subunit protein uL15 (152 aa).

The tract at residues 18–37 (RVARGIGSGKGKTAGRGVKG) is disordered. The span at 23 to 35 (IGSGKGKTAGRGV) shows a compositional bias: gly residues.

It belongs to the universal ribosomal protein uL15 family. Part of the 50S ribosomal subunit.

Its function is as follows. Binds to the 23S rRNA. This Rickettsia bellii (strain OSU 85-389) protein is Large ribosomal subunit protein uL15.